Reading from the N-terminus, the 147-residue chain is Large ribosomal subunit protein uL13 (147 aa).

Belongs to the universal ribosomal protein uL13 family. As to quaternary structure, part of the 50S ribosomal subunit.

Functionally, this protein is one of the early assembly proteins of the 50S ribosomal subunit, although it is not seen to bind rRNA by itself. It is important during the early stages of 50S assembly. The sequence is that of Large ribosomal subunit protein uL13 from Nocardia farcinica (strain IFM 10152).